A 184-amino-acid polypeptide reads, in one-letter code: NADH-quinone oxidoreductase subunit B 2 (184 aa).

4 residues coordinate [4Fe-4S] cluster: cysteine 59, cysteine 60, cysteine 125, and cysteine 153.

It belongs to the complex I 20 kDa subunit family. As to quaternary structure, NDH-1 is composed of 14 different subunits. Subunits NuoB, C, D, E, F, and G constitute the peripheral sector of the complex. The cofactor is [4Fe-4S] cluster.

The protein localises to the cell inner membrane. It catalyses the reaction a quinone + NADH + 5 H(+)(in) = a quinol + NAD(+) + 4 H(+)(out). In terms of biological role, NDH-1 shuttles electrons from NADH, via FMN and iron-sulfur (Fe-S) centers, to quinones in the respiratory chain. Couples the redox reaction to proton translocation (for every two electrons transferred, four hydrogen ions are translocated across the cytoplasmic membrane), and thus conserves the redox energy in a proton gradient. The chain is NADH-quinone oxidoreductase subunit B 2 from Solibacter usitatus (strain Ellin6076).